Consider the following 181-residue polypeptide: TATA-box-binding protein (181 aa).

2 consecutive repeat copies span residues 7-83 (IVNV…IKEL) and 98-173 (VQNM…SKTL).

It belongs to the TBP family.

Functionally, general factor that plays a role in the activation of archaeal genes transcribed by RNA polymerase. Binds specifically to the TATA box promoter element which lies close to the position of transcription initiation. The chain is TATA-box-binding protein from Methanococcus maripaludis (strain C6 / ATCC BAA-1332).